A 681-amino-acid chain; its full sequence is Fibulin-1 (681 aa).

Residues 1 to 17 (MDLYMIVLLSLCGLLRA) form the signal peptide. Intrachain disulfides connect Cys-29–Cys-55, Cys-30–Cys-62, Cys-43–Cys-63, Cys-72–Cys-103, Cys-85–Cys-104, Cys-106–Cys-125, Cys-107–Cys-138, Cys-114–Cys-139, Cys-162–Cys-171, Cys-167–Cys-176, Cys-178–Cys-191, Cys-197–Cys-210, Cys-204–Cys-219, Cys-225–Cys-237, Cys-243–Cys-256, Cys-250–Cys-265, Cys-271–Cys-283, Cys-289–Cys-301, Cys-317–Cys-330, Cys-336–Cys-348, Cys-343–Cys-357, Cys-359–Cys-372, Cys-378–Cys-390, Cys-386–Cys-399, Cys-401–Cys-414, Cys-420–Cys-429, Cys-440–Cys-454, Cys-460–Cys-473, Cys-469–Cys-482, Cys-484–Cys-498, Cys-504–Cys-517, Cys-511–Cys-526, and Cys-531–Cys-553. 3 consecutive Anaphylatoxin-like domains span residues 29 to 63 (CCED…EQCC), 68 to 107 (EDSI…CECC), and 108 to 139 (LLGS…RSCC). In terms of domain architecture, EGF-like 1 spans 158–192 (TEDQCRAAGCAQRCLNGTCSCLDGFKLKTDGKHCE). Residue Asn-173 is glycosylated (N-linked (GlcNAc...) asparagine). The region spanning 193 to 238 (DINECLLGPHHCVTGERCINTLGSYRCQREISCGTGYELTDNNKCK) is the EGF-like 2; calcium-binding domain. Residues 239-284 (DIDECDLGTHNCAAEMECQNTAGSFRCRPRMQCAAGFIQDALGSCI) enclose the EGF-like 3; calcium-binding domain. Residues 285–331 (DINECVSVTALSRGQMCFNTVGSFICQRHSVTCGRGYHLNAEGTRCV) enclose the EGF-like 4; calcium-binding domain. The EGF-like 5; calcium-binding domain maps to 332–373 (DIDECAGPDNSCDGHGCINLVGSYRCECRTGFIFNSISRSCE). The 42-residue stretch at 374-415 (DIDECRNYPGRLCAHKCENILGSYKCSCTAGFKLADDGRNCD) folds into the EGF-like 6; calcium-binding domain. The EGF-like 7; calcium-binding domain occupies 416-455 (DVNECESSPCSQGCANVYGSYQSYCRRGYQLSDADGITCE). The region spanning 456-499 (DIDECALPTGGHICSYRCHNTPGSFHCTCPASGYTLAANGRSCQ) is the EGF-like 8; calcium-binding domain. Residues 500–554 (DIDECLTGTHSCSESESCFNIQGGFRCLSFDCPANYRRSGDTRPRVDRADIIRCV) enclose the EGF-like 9; calcium-binding domain.

The protein belongs to the fibulin family. As to quaternary structure, homomultimerizes and interacts with various extracellular matrix components such as FN1, LAMA1, NID, AGC1 and CSPG2.

It is found in the secreted. It localises to the extracellular space. Its subcellular location is the extracellular matrix. In terms of biological role, incorporated into fibronectin-containing matrix fibers. May play a role in cell adhesion and migration along protein fibers within the extracellular matrix (ECM). Could be important for certain developmental processes and contribute to the supramolecular organization of ECM architecture, in particular to those of basement membranes. The sequence is that of Fibulin-1 (fbln1) from Danio rerio (Zebrafish).